We begin with the raw amino-acid sequence, 198 residues long: FMN-dependent NADH:quinone oxidoreductase 2 (198 aa).

Residue 136 to 139 (SRGG) participates in FMN binding.

The protein belongs to the azoreductase type 1 family. As to quaternary structure, homodimer. FMN serves as cofactor.

It carries out the reaction 2 a quinone + NADH + H(+) = 2 a 1,4-benzosemiquinone + NAD(+). The enzyme catalyses N,N-dimethyl-1,4-phenylenediamine + anthranilate + 2 NAD(+) = 2-(4-dimethylaminophenyl)diazenylbenzoate + 2 NADH + 2 H(+). Functionally, quinone reductase that provides resistance to thiol-specific stress caused by electrophilic quinones. Also exhibits azoreductase activity. Catalyzes the reductive cleavage of the azo bond in aromatic azo compounds to the corresponding amines. This is FMN-dependent NADH:quinone oxidoreductase 2 from Clostridium perfringens (strain 13 / Type A).